Here is a 247-residue protein sequence, read N- to C-terminus: MARLEVDILTLFPRMCAGYLGESILGKAQEAGLLAATITDIRDHATGKHRVCDDAPYGGGAGMVMKPEPLVEAIEAARARLPGAWVVLTSPRGARLDQALARRFAEHGRLILVCGRYEGVDERVMTAVDMQVSIGDFVLTGGELAALCVVDAAARLVPGVLGNAASADAESFAGVEGLLEHPQYTRPPEFRGMKVPEVLLSGDHRRIERWRRREALRATRERRPDLFARLSLPESDLRLIEAGDDEL.

Residues glycine 115 and 134–139 (IGDFVL) each bind S-adenosyl-L-methionine.

The protein belongs to the RNA methyltransferase TrmD family. Homodimer.

Its subcellular location is the cytoplasm. The catalysed reaction is guanosine(37) in tRNA + S-adenosyl-L-methionine = N(1)-methylguanosine(37) in tRNA + S-adenosyl-L-homocysteine + H(+). Specifically methylates guanosine-37 in various tRNAs. The polypeptide is tRNA (guanine-N(1)-)-methyltransferase (Anaeromyxobacter sp. (strain K)).